Here is a 112-residue protein sequence, read N- to C-terminus: Inner membrane assembly complex subunit 17 (112 aa).

The N-terminal 24 residues, 1–24 (MLRKLPINFAKWTVKKVPVQQKRF), are a transit peptide targeting the mitochondrion. Over 25 to 44 (NSQQKEISPHIMFYKNYARP) the chain is Mitochondrial matrix. A helical membrane pass occupies residues 45–62 (LGKVTLFALATYYGLEIV). Topologically, residues 63 to 112 (WWKLDASEQEAIKNSKLLICESSFSLLTFRRITEFRECEIKTRDLYDPEI) are mitochondrial intermembrane.

This sequence belongs to the INA17 family. In terms of assembly, component of the inner membrane assembly (INA) complex. Interacts with a subset of F(1)F(0)-ATP synthase subunits of the F(1)-domain and the peripheral stalk.

The protein localises to the mitochondrion inner membrane. Functionally, component of the INA complex (INAC) that promotes the biogenesis of mitochondrial F(1)F(0)-ATP synthase. INAC facilitates the assembly of the peripheral stalk and promotes the assembly of the catalytic F(1)-domain with the membrane-embedded F(0)-domain. The chain is Inner membrane assembly complex subunit 17 from Schizosaccharomyces pombe (strain 972 / ATCC 24843) (Fission yeast).